Consider the following 128-residue polypeptide: MGLWKSSPFLAFSILVLCQAGGLQAAPFRSALEGLPDPTALSEKEGRLLLAALVKAYVQRKNELEQEQEQETEGSSITAQKRSCNTATCVTHRLAGLLSRSGGVVKNNFVPTNVGSEAFGRRRRDLRA.

The N-terminal stretch at 1 to 25 (MGLWKSSPFLAFSILVLCQAGGLQA) is a signal peptide. Residues 26–80 (APFRSALEGLPDPTALSEKEGRLLLAALVKAYVQRKNELEQEQEQETEGSSITAQ) constitute a propeptide that is removed on maturation. The tract at residues 63–83 (ELEQEQEQETEGSSITAQKRS) is disordered. A compositionally biased stretch (polar residues) spans 74–83 (GSSITAQKRS). An intrachain disulfide couples C84 to C89. Residue F119 is modified to Phenylalanine amide. A propeptide spanning residues 125–128 (DLRA) is cleaved from the precursor.

Belongs to the calcitonin family.

The protein localises to the secreted. In terms of biological role, CGRP1/CALCA is a peptide hormone that induces vasodilation mediated by the CALCRL-RAMP1 receptor complex. Dilates a variety of vessels including the coronary, cerebral and systemic vasculature. Its abundance in the CNS also points toward a neurotransmitter or neuromodulator role. It also elevates platelet cAMP. CGRP1 can also bind and activate CALCR-RAMP1 (AMYR1) receptor complex. This Canis lupus familiaris (Dog) protein is Calcitonin gene-related peptide 1 (CALCA).